We begin with the raw amino-acid sequence, 595 residues long: UvrABC system protein C (595 aa).

A GIY-YIG domain is found at 17-94 (FEPGCYLMKD…IKQYQPRYNI (78 aa)). The UVR domain maps to 199–234 (KTIIKNLESRMQAASENLEFEQAKEYRDLIQNIHNL).

The protein belongs to the UvrC family. As to quaternary structure, interacts with UvrB in an incision complex.

The protein localises to the cytoplasm. Its function is as follows. The UvrABC repair system catalyzes the recognition and processing of DNA lesions. UvrC both incises the 5' and 3' sides of the lesion. The N-terminal half is responsible for the 3' incision and the C-terminal half is responsible for the 5' incision. This is UvrABC system protein C from Staphylococcus carnosus (strain TM300).